We begin with the raw amino-acid sequence, 369 residues long: LIM homeobox transcription factor 1-beta (369 aa).

LIM zinc-binding domains are found at residues cysteine 23–aspartate 73 and cysteine 82–aspartate 135. A disordered region spans residues leucine 143 to glutamine 196. The segment at residues proline 186–alanine 245 is a DNA-binding region (homeobox).

In terms of assembly, interacts with DHX9.

It is found in the nucleus. In terms of biological role, transcription factor involved in the regulation of podocyte-expressed genes. Essential for the specification of dorsal limb fate at both the zeugopodal and autopodal levels. The sequence is that of LIM homeobox transcription factor 1-beta (LMX1B) from Mesocricetus auratus (Golden hamster).